Consider the following 348-residue polypeptide: Protein RecA (348 aa).

Residue 65 to 72 participates in ATP binding; it reads GPESSGKT.

Belongs to the RecA family.

Its subcellular location is the cytoplasm. In terms of biological role, can catalyze the hydrolysis of ATP in the presence of single-stranded DNA, the ATP-dependent uptake of single-stranded DNA by duplex DNA, and the ATP-dependent hybridization of homologous single-stranded DNAs. It interacts with LexA causing its activation and leading to its autocatalytic cleavage. The chain is Protein RecA from Vibrio natriegens.